The primary structure comprises 259 residues: MLLKIAHLVGKHTIKFAQSVGIFSLFSFIAISSIIKPPLYLSLIIRQLLFIGFHSLPVVAMTTFFSGAVLALQSYTGFSRFSAENSIATVVVLSLTRELGPVLAGLIVAGRVGASIAAEIATMRVTEQVDALYTLSTDPIKYLVCPRVIAAIITMPCLVLIGDIIGVMGGYLVGIYKLDFNSTAYLTSTFQYLEPIDVISGLIKATVFGFIISIISCYSGYYSGKGAKGVGRATTSAVVNSSILILISNYLITELFFKV.

Helical transmembrane passes span 13–35, 49–69, 148–168, 195–215, and 237–257; these read TIKFAQSVGIFSLFSFIAISSII, LFIGFHSLPVVAMTTFFSGAV, VIAAIITMPCLVLIGDIIGVM, PIDVISGLIKATVFGFIISII, and AVVNSSILILISNYLITELFF.

Belongs to the MlaE permease family.

The protein localises to the cell inner membrane. Functionally, could be part of an ABC transporter complex. This Rickettsia prowazekii (strain Madrid E) protein is Probable ABC transporter permease protein RP096.